The primary structure comprises 74 residues: Putative defensin-like protein 128 (74 aa).

A signal peptide spans 1–24 (MSKLTNVVIFIVFFLGMMAKETQG). Cystine bridges form between Cys28-Cys72, Cys37-Cys56, Cys42-Cys66, and Cys46-Cys68.

It belongs to the DEFL family.

It is found in the secreted. This Arabidopsis thaliana (Mouse-ear cress) protein is Putative defensin-like protein 128 (LCR8).